A 163-amino-acid chain; its full sequence is Ribosome maturation factor RimP (163 aa).

It belongs to the RimP family.

It localises to the cytoplasm. Required for maturation of 30S ribosomal subunits. This is Ribosome maturation factor RimP from Streptococcus mutans serotype c (strain ATCC 700610 / UA159).